We begin with the raw amino-acid sequence, 267 residues long: 4-hydroxy-tetrahydrodipicolinate reductase (267 aa).

NAD(+)-binding positions include 8–13 (GAAGRM) and glutamate 34. Arginine 35 serves as a coordination point for NADP(+). Residues 98–100 (GST) and 122–125 (APNM) contribute to the NAD(+) site. Histidine 155 serves as the catalytic Proton donor/acceptor. Histidine 156 provides a ligand contact to (S)-2,3,4,5-tetrahydrodipicolinate. Lysine 159 functions as the Proton donor in the catalytic mechanism. (S)-2,3,4,5-tetrahydrodipicolinate is bound at residue 165–166 (GT).

It belongs to the DapB family.

It is found in the cytoplasm. The catalysed reaction is (S)-2,3,4,5-tetrahydrodipicolinate + NAD(+) + H2O = (2S,4S)-4-hydroxy-2,3,4,5-tetrahydrodipicolinate + NADH + H(+). It carries out the reaction (S)-2,3,4,5-tetrahydrodipicolinate + NADP(+) + H2O = (2S,4S)-4-hydroxy-2,3,4,5-tetrahydrodipicolinate + NADPH + H(+). It participates in amino-acid biosynthesis; L-lysine biosynthesis via DAP pathway; (S)-tetrahydrodipicolinate from L-aspartate: step 4/4. Its function is as follows. Catalyzes the conversion of 4-hydroxy-tetrahydrodipicolinate (HTPA) to tetrahydrodipicolinate. In Geotalea uraniireducens (strain Rf4) (Geobacter uraniireducens), this protein is 4-hydroxy-tetrahydrodipicolinate reductase.